Reading from the N-terminus, the 374-residue chain is Ribonuclease D (374 aa).

One can recognise a 3'-5' exonuclease domain in the interval 3 to 171; it reads YQLITTDDGL…MAIRLVEETT (169 aa). Positions 210 to 289 constitute an HRDC domain; the sequence is KGRHLACLQK…AETQTMDAAE (80 aa).

The protein belongs to the RNase D family. A divalent metal cation serves as cofactor.

It is found in the cytoplasm. It carries out the reaction Exonucleolytic cleavage that removes extra residues from the 3'-terminus of tRNA to produce 5'-mononucleotides.. Functionally, exonuclease involved in the 3' processing of various precursor tRNAs. Initiates hydrolysis at the 3'-terminus of an RNA molecule and releases 5'-mononucleotides. The chain is Ribonuclease D from Musicola paradisiaca (strain Ech703) (Dickeya paradisiaca).